A 451-amino-acid polypeptide reads, in one-letter code: UPF0210 protein lin0538 (451 aa).

Belongs to the UPF0210 family. Homodimer.

The sequence is that of UPF0210 protein lin0538 from Listeria innocua serovar 6a (strain ATCC BAA-680 / CLIP 11262).